A 453-amino-acid polypeptide reads, in one-letter code: MAGAGGGGCPAGGNDFQWCFSQVKGAVDEDVAEADIISTVEFNYSGDLLATGDKGGRVVIFQREQENKGRAHSRGEYNVYSTFQSHEPEFDYLKSLEIEEKINKIRWLPQQNAAHFLLSTNDKTIKLWKISERDKRAEGYNLKDEDGRLRDPFRITALRVPILKPMDLMVEASPRRIFANAHTYHINSISVNSDHETYLSADDLRINLWHLEITDRSFNIVDIKPANMEELTEVITAAEFHPHQCNVFVYSSSKGTIRLCDMRSSALCDRHAKFFEEPEDPSSRSFFSEIISSISDVKFSHSGRYMMTRDYLSVKVWDLNMEGRPVETHQVHEYLRSKLCSLYENDCIFDKFECCWNGSDSAIMTGSYNNFFRMFDRNTRRDVTLEASRENSKPRASLKPRKVCTGGKRKKDEISVDSLDFNKKILHTAWHPMESIIAVAATNNLYIFQDKIN.

4 WD repeats span residues 32–71 (AEAD…KGRA), 97–138 (EIEE…KRAE), 181–219 (AHTY…RSFN), and 230–270 (ELTE…LCDR). Residue Ser-285 is modified to Phosphoserine. WD repeat units lie at residues 289–327 (EIIS…RPVE), 344–385 (ENDC…DVTL), and 420–452 (DFNK…QDKI). Residue Tyr-305 is modified to Phosphotyrosine. Thr-308 carries the phosphothreonine modification.

This sequence belongs to the phosphatase 2A regulatory subunit B family. PP2A consists of a common heterodimeric core enzyme, composed of a 36 kDa catalytic subunit (subunit C) and a 65 kDa constant regulatory subunit (PR65 or subunit A), that associates with a variety of regulatory subunits. Proteins that associate with the core dimer include three families of regulatory subunits B (the R2/B/PR55/B55, R3/B''/PR72/PR130/PR59 and R5/B'/B56 families), the 48 kDa variable regulatory subunit, viral proteins, and cell signaling molecules. Interacts with IER5.

It is found in the cytoplasm. In terms of biological role, substrate-recognition subunit of protein phosphatase 2A (PP2A) that plays a key role in cell cycle by controlling mitosis entry and exit. Involved in chromosome clustering during late mitosis by mediating dephosphorylation of MKI67. The activity of PP2A complexes containing PPP2R2D (PR55-delta) fluctuate during the cell cycle: the activity is high in interphase and low in mitosis. In Mus musculus (Mouse), this protein is Serine/threonine-protein phosphatase 2A 55 kDa regulatory subunit B delta isoform.